The sequence spans 542 residues: CTP synthase (542 aa).

Residues 1 to 265 (MTRYVFITGG…DREILAHFQM (265 aa)) are amidoligase domain. Serine 13 is a CTP binding site. A UTP-binding site is contributed by serine 13. ATP is bound by residues 14–19 (SLGKGL) and aspartate 71. Aspartate 71 and glutamate 139 together coordinate Mg(2+). CTP-binding positions include 146–148 (DIE), 186–191 (KTKPTQ), and lysine 222. UTP is bound by residues 186 to 191 (KTKPTQ) and lysine 222. 238 to 240 (RDV) lines the ATP pocket. Positions 291 to 541 (TIAIVGKYTG…IAAAIDQSRL (251 aa)) constitute a Glutamine amidotransferase type-1 domain. Glycine 353 contributes to the L-glutamine binding site. The active-site Nucleophile; for glutamine hydrolysis is the cysteine 380. Residues 381–384 (FGMQ), glutamate 404, and arginine 469 contribute to the L-glutamine site. Active-site residues include histidine 514 and glutamate 516.

The protein belongs to the CTP synthase family. In terms of assembly, homotetramer.

The enzyme catalyses UTP + L-glutamine + ATP + H2O = CTP + L-glutamate + ADP + phosphate + 2 H(+). It carries out the reaction L-glutamine + H2O = L-glutamate + NH4(+). The catalysed reaction is UTP + NH4(+) + ATP = CTP + ADP + phosphate + 2 H(+). It participates in pyrimidine metabolism; CTP biosynthesis via de novo pathway; CTP from UDP: step 2/2. Its activity is regulated as follows. Allosterically activated by GTP, when glutamine is the substrate; GTP has no effect on the reaction when ammonia is the substrate. The allosteric effector GTP functions by stabilizing the protein conformation that binds the tetrahedral intermediate(s) formed during glutamine hydrolysis. Inhibited by the product CTP, via allosteric rather than competitive inhibition. Its function is as follows. Catalyzes the ATP-dependent amination of UTP to CTP with either L-glutamine or ammonia as the source of nitrogen. Regulates intracellular CTP levels through interactions with the four ribonucleotide triphosphates. This Methylorubrum extorquens (strain CM4 / NCIMB 13688) (Methylobacterium extorquens) protein is CTP synthase.